The primary structure comprises 327 residues: Probable protein phosphatase 2C 59 (327 aa).

Residues 1–24 (MREVLLLGSLVVLALLSLFPCCSC) form the signal peptide. The PPM-type phosphatase domain occupies 64 to 310 (SYGYASSPGK…DNITCLVVRF (247 aa)). Mn(2+) contacts are provided by Asp100, Gly101, Asp262, and Asp301.

This sequence belongs to the PP2C family. The cofactor is Mg(2+). Mn(2+) is required as a cofactor.

The catalysed reaction is O-phospho-L-seryl-[protein] + H2O = L-seryl-[protein] + phosphate. It carries out the reaction O-phospho-L-threonyl-[protein] + H2O = L-threonyl-[protein] + phosphate. The sequence is that of Probable protein phosphatase 2C 59 from Oryza sativa subsp. japonica (Rice).